The primary structure comprises 318 residues: Ribosomal RNA small subunit methyltransferase H (318 aa).

Residues 37–39, Asp-57, Phe-83, Asp-104, and Gln-111 each bind S-adenosyl-L-methionine; that span reads GGH.

This sequence belongs to the methyltransferase superfamily. RsmH family.

It is found in the cytoplasm. The catalysed reaction is cytidine(1402) in 16S rRNA + S-adenosyl-L-methionine = N(4)-methylcytidine(1402) in 16S rRNA + S-adenosyl-L-homocysteine + H(+). In terms of biological role, specifically methylates the N4 position of cytidine in position 1402 (C1402) of 16S rRNA. The protein is Ribosomal RNA small subunit methyltransferase H of Neisseria gonorrhoeae (strain NCCP11945).